Reading from the N-terminus, the 83-residue chain is U5-theraphotoxin-Hs1d (83 aa).

The signal sequence occupies residues 1–21; that stretch reads MKTSMFLTLTGLVLLFVVCYA. A propeptide spanning residues 22 to 49 is cleaved from the precursor; it reads SESEEKEFPKELLSSIFAADSDFKVEER. 3 disulfide bridges follow: C51–C63, C56–C68, and C62–C75.

The protein belongs to the neurotoxin 10 (Hwtx-1) family. 51 (Hntx-8) subfamily. Hntx-8 sub-subfamily. Expressed by the venom gland.

The protein localises to the secreted. Agglutinates erythrocytes. The protein is U5-theraphotoxin-Hs1d of Cyriopagopus schmidti (Chinese bird spider).